The sequence spans 384 residues: N-acetyldiaminopimelate deacetylase (384 aa).

Residue D75 is part of the active site. The active-site Proton acceptor is E134.

The protein belongs to the peptidase M20A family. N-acetyldiaminopimelate deacetylase subfamily.

The enzyme catalyses N-acetyl-(2S,6S)-2,6-diaminopimelate + H2O = (2S,6S)-2,6-diaminopimelate + acetate. The protein operates within amino-acid biosynthesis; L-lysine biosynthesis via DAP pathway; LL-2,6-diaminopimelate from (S)-tetrahydrodipicolinate (acetylase route): step 3/3. Its function is as follows. Catalyzes the conversion of N-acetyl-diaminopimelate to diaminopimelate and acetate. This Lactobacillus helveticus (strain DPC 4571) protein is N-acetyldiaminopimelate deacetylase.